Here is a 247-residue protein sequence, read N- to C-terminus: Acetoacetate decarboxylase (247 aa).

Catalysis depends on K116, which acts as the Schiff-base intermediate with acetoacetate.

It belongs to the ADC family.

The enzyme catalyses acetoacetate + H(+) = acetone + CO2. Functionally, catalyzes the conversion of acetoacetate to acetone and carbon dioxide. In Ralstonia nicotianae (strain ATCC BAA-1114 / GMI1000) (Ralstonia solanacearum), this protein is Acetoacetate decarboxylase.